The following is a 313-amino-acid chain: MALKRKDFLGLYNVEADEINEILDTAQAMKEIFTRTVKKVPTLRGKTIINLFFEPSTRTKSSFDIAAKRLSADVMSISKSSSSVAKGETLLDTARTLEVMGADVVVVRHSAPGAARFLAENLSASVLNAGDGAHAHPTQALLDMYTIKEKMGKIEGLNVLIIGDIAHSRVARSNIWGLTKLGARVRVVGPGTLIPRDIEEMGVEVYRDLDEALEGVDVVNILRIQLERQQKGLFPSIREYRHFYGMNEVRLRKLEDRALVMHPGPMNRGIEIESIVADGEQSVITEQVTNGVAIRMALLYLLAGREINDEDLA.

Residues Arg58 and Thr59 each contribute to the carbamoyl phosphate site. Lys86 contacts L-aspartate. The carbamoyl phosphate site is built by Arg108, His136, and Gln139. L-aspartate contacts are provided by Arg169 and Arg223. Positions 264 and 265 each coordinate carbamoyl phosphate.

Belongs to the aspartate/ornithine carbamoyltransferase superfamily. ATCase family. In terms of assembly, heterododecamer (2C3:3R2) of six catalytic PyrB chains organized as two trimers (C3), and six regulatory PyrI chains organized as three dimers (R2).

The catalysed reaction is carbamoyl phosphate + L-aspartate = N-carbamoyl-L-aspartate + phosphate + H(+). The protein operates within pyrimidine metabolism; UMP biosynthesis via de novo pathway; (S)-dihydroorotate from bicarbonate: step 2/3. Functionally, catalyzes the condensation of carbamoyl phosphate and aspartate to form carbamoyl aspartate and inorganic phosphate, the committed step in the de novo pyrimidine nucleotide biosynthesis pathway. The polypeptide is Aspartate carbamoyltransferase catalytic subunit (Halothermothrix orenii (strain H 168 / OCM 544 / DSM 9562)).